The chain runs to 198 residues: dTTP/UTP pyrophosphatase (198 aa).

Aspartate 75 serves as the catalytic Proton acceptor.

Belongs to the Maf family. YhdE subfamily. The cofactor is a divalent metal cation.

Its subcellular location is the cytoplasm. It catalyses the reaction dTTP + H2O = dTMP + diphosphate + H(+). It carries out the reaction UTP + H2O = UMP + diphosphate + H(+). Nucleoside triphosphate pyrophosphatase that hydrolyzes dTTP and UTP. May have a dual role in cell division arrest and in preventing the incorporation of modified nucleotides into cellular nucleic acids. This chain is dTTP/UTP pyrophosphatase, found in Wolbachia sp. subsp. Drosophila simulans (strain wRi).